Consider the following 314-residue polypeptide: Coiled-coil domain-containing protein 42 like-2 (314 aa).

2 coiled-coil regions span residues 34–133 (RLLE…KGTL) and 175–231 (NKLL…FQWE).

This sequence belongs to the CFAP73 family.

This is Coiled-coil domain-containing protein 42 like-2 from Xenopus tropicalis (Western clawed frog).